A 1012-amino-acid polypeptide reads, in one-letter code: DNA polymerase gamma (1012 aa).

This sequence belongs to the DNA polymerase type-A family. Mg(2+) serves as cofactor.

The protein localises to the mitochondrion. It carries out the reaction DNA(n) + a 2'-deoxyribonucleoside 5'-triphosphate = DNA(n+1) + diphosphate. Involved in the replication of mitochondrial DNA. The protein is DNA polymerase gamma (MIP1) of Komagataella pastoris (Yeast).